A 176-amino-acid polypeptide reads, in one-letter code: NAD(P)H-quinone oxidoreductase subunit J (176 aa).

Residues 1-32 form a disordered region; sequence MEKEGLAKSSDTSIKKEGFISQSLSKDGIPNQ. The segment covering 20 to 32 has biased composition (polar residues); sequence ISQSLSKDGIPNQ.

Belongs to the complex I 30 kDa subunit family. As to quaternary structure, NDH-1 can be composed of about 15 different subunits; different subcomplexes with different compositions have been identified which probably have different functions.

Its subcellular location is the cellular thylakoid membrane. It catalyses the reaction a plastoquinone + NADH + (n+1) H(+)(in) = a plastoquinol + NAD(+) + n H(+)(out). The catalysed reaction is a plastoquinone + NADPH + (n+1) H(+)(in) = a plastoquinol + NADP(+) + n H(+)(out). Functionally, NDH-1 shuttles electrons from an unknown electron donor, via FMN and iron-sulfur (Fe-S) centers, to quinones in the respiratory and/or the photosynthetic chain. The immediate electron acceptor for the enzyme in this species is believed to be plastoquinone. Couples the redox reaction to proton translocation, and thus conserves the redox energy in a proton gradient. Cyanobacterial NDH-1 also plays a role in inorganic carbon-concentration. The sequence is that of NAD(P)H-quinone oxidoreductase subunit J from Prochlorococcus marinus (strain MIT 9215).